A 534-amino-acid chain; its full sequence is Fimbrial subunit type 2 (534 aa).

Positions 1–32 (MKYNTSTLGRRAAAAAGVLTLAVLGLAPMAQA) are cleaved as a signal peptide. 2 disordered regions span residues 56-76 (GDGNPIGAPDGTASNDDGKGA) and 329-376 (TYAE…DKDG). The segment covering 334–347 (PPAPETPPANPDNP) has biased composition (pro residues). Residues 361–376 (TIKKVDGNDRSGDKDG) are compositionally biased toward basic and acidic residues. Residues 492–496 (LPLTG) carry the LPXTG sorting signal motif. Threonine 495 carries the post-translational modification Pentaglycyl murein peptidoglycan amidated threonine. Residues 496 to 534 (GANGMLILTASGAALLMIAVGSVLVARYRERKRNRDLAA) constitute a propeptide, removed by sortase.

The protein localises to the secreted. The protein resides in the cell wall. Its subcellular location is the fimbrium. Its function is as follows. Major fimbrial subunit of A.naeslundii. This chain is Fimbrial subunit type 2, found in Actinomyces naeslundii.